Reading from the N-terminus, the 587-residue chain is Sorting nexin 2A (587 aa).

Disordered regions lie at residues 1 to 78 (MMGS…DSDP) and 115 to 151 (SPFD…SSSD). Polar residues-rich tracts occupy residues 42–59 (NGDT…TLSN) and 123–134 (SEINGTEDNSLH). The span at 135–150 (SQFSDSLSRSPSSSSS) shows a compositional bias: low complexity. Serine 144 bears the Phosphoserine mark. Residues 157-277 (VSNPQKEQEI…KVFLQVQGKL (121 aa)) form the PX domain. Positions 201, 227, and 244 each coordinate a 1,2-diacyl-sn-glycero-3-phospho-(1D-myo-inositol-3-phosphate). One can recognise a BAR domain in the interval 331–586 (LRQSVSNDWG…TSQYDREKQS (256 aa)).

It belongs to the sorting nexin family. As to quaternary structure, homodimer. Heterodimer with SNX1 or SNX2A. Component of the retromer complex which consists of VPS29 (MAG1), VPS26 (VPS26A or VPS26B), VPS35 (VPS35A or VPS35B or VPS35C), VPS5/17 (SNX1 or SNX2A or SNX2B). As to expression, ubiquitously expressed but at a lower level in flowers, siliques, and senescing leaves.

The protein localises to the cytoplasm. The protein resides in the endosome membrane. It localises to the prevacuolar compartment membrane. Its subcellular location is the golgi apparatus. It is found in the trans-Golgi network membrane. In terms of biological role, plays a role in vesicular protein sorting. Acts at the crossroads between the secretory and endocytic pathways. Is involved in the endosome to vacuole protein transport and, as component of the membrane-associated retromer complex, is also involved in endosome-to-Golgi retrograde transport. Also involved in the efficient sorting of seed storage protein globulin 12S. This is Sorting nexin 2A (SNX2A) from Arabidopsis thaliana (Mouse-ear cress).